A 474-amino-acid polypeptide reads, in one-letter code: MIILKRLFSNMSILQPPEVVRGMTKLEKEAFRMPVDFPVIEIEARDAGIVGRRVRLEPYLIGHKLKPLKNLVDSEKDGKKYLVFHPDKVQEDETRFKILELLKRELGNEKLLDWTTLSKDLTFENWDAKSIFKAVLPVGIDYSSYTQTGHIIHCNFADEILPFRFIIAEVLLDKVNNCKTVVQKGNIITNVYRNLDLELLAGEDNYVTEVKETGLRFKMDFSKVYWNSRLSHEHERVSGMFNTQSLVYDACCGIGPFVLPATLKRKPKRVVANDLNPESVKWLKVNVGLNKIKEERIEIHNMDAKMFIKENVADDVVRLMLEESTAGEFENEVPKPMSEVHVVMNLPAYAVNFLPAFRGALSRFKDEIEKVPLDKRYKWNVYCYLFAKSHVDVPDSWYEDEARRMCDEKTKWERSLVVKCHNVRTVSSRKEMFCAQLELPYEFLLAEPFPDEPEAQCESEEAEEPSSKRIKVDT.

Residues His-234, Asp-274–Leu-275, Asp-303–Ala-304, and Asn-345 contribute to the S-adenosyl-L-methionine site. A compositionally biased stretch (acidic residues) spans Glu-452–Glu-464. Positions Glu-452 to Thr-474 are disordered. Over residues Pro-465–Thr-474 the composition is skewed to basic and acidic residues.

It belongs to the class I-like SAM-binding methyltransferase superfamily. TRM5/TYW2 family. In terms of assembly, monomer.

The protein resides in the mitochondrion matrix. It localises to the nucleus. It is found in the cytoplasm. It catalyses the reaction guanosine(37) in tRNA + S-adenosyl-L-methionine = N(1)-methylguanosine(37) in tRNA + S-adenosyl-L-homocysteine + H(+). Its function is as follows. Specifically methylates the N1 position of guanosine-37 in various cytoplasmic and mitochondrial tRNAs. Methylation is not dependent on the nature of the nucleoside 5' of the target nucleoside. This is the first step in the biosynthesis of wybutosine (yW), a modified base adjacent to the anticodon of tRNAs and required for accurate decoding. This chain is tRNA (guanine(37)-N(1))-methyltransferase, found in Caenorhabditis elegans.